The primary structure comprises 1207 residues: DNA-directed RNA polymerase subunit beta' (1207 aa).

Residues Cys60, Cys62, Cys75, and Cys78 each contribute to the Zn(2+) site. Positions 449, 451, and 453 each coordinate Mg(2+). Residues Cys822, Cys896, Cys903, and Cys906 each contribute to the Zn(2+) site.

This sequence belongs to the RNA polymerase beta' chain family. As to quaternary structure, the RNAP catalytic core consists of 2 alpha, 1 beta, 1 beta' and 1 omega subunit. When a sigma factor is associated with the core the holoenzyme is formed, which can initiate transcription. The cofactor is Mg(2+). Zn(2+) serves as cofactor.

It carries out the reaction RNA(n) + a ribonucleoside 5'-triphosphate = RNA(n+1) + diphosphate. DNA-dependent RNA polymerase catalyzes the transcription of DNA into RNA using the four ribonucleoside triphosphates as substrates. This is DNA-directed RNA polymerase subunit beta' from Staphylococcus aureus (strain USA300).